Here is a 293-residue protein sequence, read N- to C-terminus: DOMON domain-containing protein FRRS1L (293 aa).

A signal peptide spans 1 to 28 (MAGQPLRRPAWVPLLLRLLLAGIAACDA). Residues 29 to 60 (SPADDSAGPGGRGPRGRARGDAGADEAVPRHD) form a disordered region. The segment covering 46 to 60 (ARGDAGADEAVPRHD) has biased composition (basic and acidic residues). Positions 119-234 (CDYFLSYRMI…WYYLFAWGPA (116 aa)) constitute a DOMON domain. A helical transmembrane segment spans residues 271 to 291 (TFSSPFCLLLIVALTFYLLMG).

Component of the outer core of AMPAR complex. AMPAR complex consists of an inner core made of 4 pore-forming GluA/GRIA proteins (GRIA1, GRIA2, GRIA3 and GRIA4) and 4 major auxiliary subunits arranged in a twofold symmetry. One of the two pairs of distinct binding sites is occupied either by CNIH2, CNIH3 or CACNG2, CACNG3. The other harbors CACNG2, CACNG3, CACNG4, CACNG8 or GSG1L. This inner core of AMPAR complex is complemented by outer core constituents binding directly to the GluA/GRIA proteins at sites distinct from the interaction sites of the inner core constituents. Outer core constituents include at least PRRT1, PRRT2, CKAMP44/SHISA9, FRRS1L and NRN1. The proteins of the inner and outer core serve as a platform for other, more peripherally associated AMPAR constituents. Alone or in combination, these auxiliary subunits control the gating and pharmacology of the AMPAR complex and profoundly impact their biogenesis and protein processing. As to expression, expressed in the brain (at protein level). In embryos expression is evident in the ventral forebrain, but a lower level is seen in the remainder of the embryos. In the adult brain, expressed in the cortex, cerebellum, hippocampus and basal ganglia.

It localises to the cell membrane. It is found in the synapse. Its function is as follows. Important modulator of glutamate signaling pathway. This Mus musculus (Mouse) protein is DOMON domain-containing protein FRRS1L (Frrs1l).